Here is a 644-residue protein sequence, read N- to C-terminus: Kelch-like protein 34 (644 aa).

The 68-residue stretch at 29 to 96 (CDVTLETEGS…IYTAWLSLSM (68 aa)) folds into the BTB domain. The BACK domain maps to 131 to 238 (CCFAANVAAR…PADVLRRVYS (108 aa)). A disordered region spans residues 304–329 (AARGQVAAPEPEEEEEELEEEEEEEE). Acidic residues predominate over residues 313-329 (EPEEEEEELEEEEEEEE). 6 Kelch repeats span residues 320 to 366 (ELEE…TAGN), 367 to 425 (FLFV…AVGE), 426 to 473 (RLLA…VGDR), 475 to 526 (VVYI…VLRG), 528 to 571 (VFAF…VVEE), and 573 to 623 (ALLL…VLQL).

The protein is Kelch-like protein 34 (KLHL34) of Homo sapiens (Human).